Reading from the N-terminus, the 131-residue chain is Small ribosomal subunit protein uS8 (131 aa).

It belongs to the universal ribosomal protein uS8 family. As to quaternary structure, part of the 30S ribosomal subunit. Contacts proteins S5 and S12.

In terms of biological role, one of the primary rRNA binding proteins, it binds directly to 16S rRNA central domain where it helps coordinate assembly of the platform of the 30S subunit. The sequence is that of Small ribosomal subunit protein uS8 from Nitrosospira multiformis (strain ATCC 25196 / NCIMB 11849 / C 71).